The chain runs to 24 residues: Small ribosomal subunit protein uS19 (24 aa).

The interval 1–24 is disordered; sequence KLGEFSPTRTYRGHNKKDKKMQKK. Over residues 11–24 the composition is skewed to basic residues; that stretch reads YRGHNKKDKKMQKK.

It belongs to the universal ribosomal protein uS19 family.

Its function is as follows. Protein S19 forms a complex with S13 that binds strongly to the 16S ribosomal RNA. The chain is Small ribosomal subunit protein uS19 from Phytoplasma sp. (strain STRAWB2).